A 1397-amino-acid polypeptide reads, in one-letter code: Clustered mitochondria protein homolog (1397 aa).

The stretch at 30-63 (LPSFIDQKGDLKIPSHYEETITDLKLTLTVIPKT) is one TPR 1 repeat. 2 disordered regions span residues 158–203 (TARG…LSRE) and 526–555 (DAAP…DEEE). Basic and acidic residues predominate over residues 161–203 (GEAEKSDTNEEEQEQGKGKVGKPNEKESGETKETDSQPELSRE). Positions 368 to 640 (DSSRSQLMLI…RTTPRDIEFI (273 aa)) constitute a Clu domain. Residues 559–595 (EKVLYGLSSDSQKILEDKSFEKPLKLLSEVFHLKPHG) form a TPR 2 repeat. 4 stretches are compositionally biased toward basic and acidic residues: residues 686–703 (EGKL…EEKS), 812–831 (EKVE…KERA), 839–860 (SDDK…NTES), and 1019–1033 (QREQ…NVEK). 3 disordered regions span residues 686–707 (EGKL…QIAL), 812–869 (EKVE…EEQP), and 1019–1050 (QREQ…PIEN). The span at 1034–1043 (KHSKKSKKKS) shows a compositional bias: basic residues. 2 TPR repeats span residues 1167–1200 (IAAY…WTST) and 1209–1242 (VNLL…CSHL). Composition is skewed to polar residues over residues 1314 to 1338 (AQSK…SQAS) and 1362 to 1373 (PQSDPQIANQSV). Residues 1314-1397 (AQSKKSPPPT…AKSKSKHTKA (84 aa)) are disordered. Residues 1375 to 1384 (DILKFIEGKS) show a composition bias toward basic and acidic residues. Positions 1386–1397 (PNAKSKSKHTKA) are enriched in basic residues.

It belongs to the CLU family. May associate with the eukaryotic translation initiation factor 3 (eIF-3) complex.

Its subcellular location is the cytoplasm. MRNA-binding protein involved in proper cytoplasmic distribution of mitochondria. The polypeptide is Clustered mitochondria protein homolog (Lodderomyces elongisporus (strain ATCC 11503 / CBS 2605 / JCM 1781 / NBRC 1676 / NRRL YB-4239) (Yeast)).